Consider the following 240-residue polypeptide: Ubiquinone biosynthesis O-methyltransferase (240 aa).

Residues arginine 44, glycine 64, aspartate 85, and methionine 129 each coordinate S-adenosyl-L-methionine.

The protein belongs to the methyltransferase superfamily. UbiG/COQ3 family.

It catalyses the reaction a 3-demethylubiquinol + S-adenosyl-L-methionine = a ubiquinol + S-adenosyl-L-homocysteine + H(+). The enzyme catalyses a 3-(all-trans-polyprenyl)benzene-1,2-diol + S-adenosyl-L-methionine = a 2-methoxy-6-(all-trans-polyprenyl)phenol + S-adenosyl-L-homocysteine + H(+). The protein operates within cofactor biosynthesis; ubiquinone biosynthesis. Its function is as follows. O-methyltransferase that catalyzes the 2 O-methylation steps in the ubiquinone biosynthetic pathway. This Escherichia coli O6:H1 (strain CFT073 / ATCC 700928 / UPEC) protein is Ubiquinone biosynthesis O-methyltransferase.